The primary structure comprises 352 residues: Glycerol-3-phosphate dehydrogenase 1-like protein (352 aa).

Position 13-18 (13-18 (GSGNWG)) interacts with NAD(+). Lys123 lines the substrate pocket. Ala156 contacts NAD(+). Lys207 acts as the Proton acceptor in catalysis. Residues Arg272, Lys299, and Gln301 each contribute to the NAD(+) site. Residue 272–273 (RN) participates in substrate binding.

This sequence belongs to the NAD-dependent glycerol-3-phosphate dehydrogenase family.

The protein resides in the cytoplasm. The catalysed reaction is sn-glycerol 3-phosphate + NAD(+) = dihydroxyacetone phosphate + NADH + H(+). Its function is as follows. Plays a role in regulating cardiac sodium current. The sequence is that of Glycerol-3-phosphate dehydrogenase 1-like protein (gpd1l) from Xenopus tropicalis (Western clawed frog).